The sequence spans 233 residues: Large ribosomal subunit protein uL2 (233 aa).

The disordered stretch occupies residues 194 to 233 (HPHGGGNHQHVGRPSTVGRGTPPGRKVGRLSPKRRKKYGR). A compositionally biased stretch (basic residues) spans 219-233 (KVGRLSPKRRKKYGR).

The protein belongs to the universal ribosomal protein uL2 family. As to quaternary structure, part of the 50S ribosomal subunit. Forms a bridge to the 30S subunit in the 70S ribosome.

Functionally, one of the primary rRNA binding proteins. Required for association of the 30S and 50S subunits to form the 70S ribosome, for tRNA binding and peptide bond formation. It has been suggested to have peptidyltransferase activity; this is somewhat controversial. Makes several contacts with the 16S rRNA in the 70S ribosome. The polypeptide is Large ribosomal subunit protein uL2 (Picrophilus torridus (strain ATCC 700027 / DSM 9790 / JCM 10055 / NBRC 100828 / KAW 2/3)).